A 478-amino-acid chain; its full sequence is MTGNTNAGAPRTLYDKIFDAHVVERSDDGTCILYIDRHLVHEVTSPQAFEGLRMAGRKVRRPDQTIAVPDHNVPTTPDRVNGIENPEGRIQVAELDKNAREFGLNYYPMSDIRQGIVHIVGPEQGWTLPGMTVVCGDSHTATHGAFGALAHGIGTSEVEHVLATQTLIQKKSRNMKVEITGKLRPGVTAKDITLSVIGATGTAGGTGYVIEYCGEAIRDLSMEGRMTVCNMAIEGGARAGLIAPDEKTFEYVKGRPHAPKGAAWEAAQAWWKTLFSDEGAHWDKVVTIRGEDIAPVVTWGTSPEDVLPITGKVPAPEDFEGGKVEAARRSLDYMGLKPGTPLNEIRIDAVFIGSCTNGRIEDLRAAAGILKGHKLAPGVRGMVVPGSGLVRMQAEEEGLDNIFIDAGFEWRLAGCSMCLGMNPDQLAPGERCAATSNRNFEGRMGRGGRTHLMSPVMAAAAGIKGHLTDVRELLAETV.

[4Fe-4S] cluster contacts are provided by Cys355, Cys415, and Cys418.

This sequence belongs to the aconitase/IPM isomerase family. LeuC type 1 subfamily. In terms of assembly, heterodimer of LeuC and LeuD. [4Fe-4S] cluster serves as cofactor.

It catalyses the reaction (2R,3S)-3-isopropylmalate = (2S)-2-isopropylmalate. It functions in the pathway amino-acid biosynthesis; L-leucine biosynthesis; L-leucine from 3-methyl-2-oxobutanoate: step 2/4. Catalyzes the isomerization between 2-isopropylmalate and 3-isopropylmalate, via the formation of 2-isopropylmaleate. The sequence is that of 3-isopropylmalate dehydratase large subunit from Paracoccus denitrificans (strain Pd 1222).